The chain runs to 389 residues: uncharacterized protein (389 aa).

4 disordered regions span residues 119–156 (SSLF…GENQ), 180–233 (PTSK…SSMG), 294–321 (SIPS…TSRT), and 362–389 (PEDM…EIKV). A compositionally biased stretch (polar residues) spans 137-155 (SPSTINIEKNRHSSNSGEN). Acidic residues predominate over residues 190 to 204 (DDGDEEDDTDDEGEA).

This is an uncharacterized protein from Caenorhabditis elegans.